A 403-amino-acid polypeptide reads, in one-letter code: KFHAYFPTANSYPAIVADMLSGAIACIGFTWIASPACTELEVAMLDWLGKMLELPAEFLACSGGKGGGVIQGTASEATLVALLGAKAKKMKEVRETHPDWDDHTIISKLVGYSSAQAHSSVERAGLLGGVKLRSVPADEQNRLRGEALEKAIEQDLADGLIPFYAVVTLGTTNSCAFDRLDECGPVANKHNVWVHVDAAYAGSAFICPEYRHLMKGIETADSFNFNPHKWMLVNFDCSAMWLKDPSWVVNAFNVDPLYLKHDMQGSAPDYRHWQIPIGRRFRALKLWFVLRLYGVENLQAHIRRHCTYAQQFAELCVQDSRFELAAEVNMGLVCFRLKGSNERNEALLKRINGRGKIHLVPAKIRDVYFLRMAVCSRFTRPEDMEYSWQEVSAAADEEEQQQK.

Substrate is bound at residue Thr8. Residues Ala74 and Ser75 each coordinate pyridoxal 5'-phosphate. His118 contacts substrate. The active site involves His118. Pyridoxal 5'-phosphate-binding residues include Asp197 and Asn226. Lys229 is modified (N6-(pyridoxal phosphate)lysine). The tract at residues 250–276 (NAFNVDPLYLKHDMQGSAPDYRHWQIP) is disordered.

This sequence belongs to the group II decarboxylase family. In terms of assembly, homodimer. Pyridoxal 5'-phosphate serves as cofactor.

It catalyses the reaction L-dopa + H(+) = dopamine + CO2. It carries out the reaction 5-hydroxy-L-tryptophan + H(+) = serotonin + CO2. Catalyzes the decarboxylation of L-3,4-dihydroxyphenylalanine (L-DOPA) to dopamine and L-5-hydroxytryptophan (5-HTP) to serotonin. Catalyzes the formation of serotonin more efficiently than dopamine. Displays no activity to tyrosine. Variation in the synthesis of bioamines may be a factor contributing to natural variation in life span. The chain is Aromatic-L-amino-acid decarboxylase (Ddc) from Drosophila lebanonensis (Fruit fly).